The chain runs to 164 residues: Transcription factor E (164 aa).

Residues 5–87 (NDKVIRGYLR…LWHLDFSDIE (83 aa)) enclose the HTH TFE/IIEalpha-type domain.

This sequence belongs to the TFE family. In terms of assembly, monomer. Interaction with RNA polymerase subunits RpoF and RpoE is necessary for Tfe stimulatory transcription activity. Able to interact with Tbp and RNA polymerase in the absence of DNA promoter. Interacts both with the preinitiation and elongation complexes.

Transcription factor that plays a role in the activation of archaeal genes transcribed by RNA polymerase. Facilitates transcription initiation by enhancing TATA-box recognition by TATA-box-binding protein (Tbp), and transcription factor B (Tfb) and RNA polymerase recruitment. Not absolutely required for transcription in vitro, but particularly important in cases where Tbp or Tfb function is not optimal. It dynamically alters the nucleic acid-binding properties of RNA polymerases by stabilizing the initiation complex and destabilizing elongation complexes. Seems to translocate with the RNA polymerase following initiation and acts by binding to the non template strand of the transcription bubble in elongation complexes. In Methanosarcina mazei (strain ATCC BAA-159 / DSM 3647 / Goe1 / Go1 / JCM 11833 / OCM 88) (Methanosarcina frisia), this protein is Transcription factor E.